The primary structure comprises 95 residues: MSVTRDDVAYIAALSRLQFSDEEMATMTTELNSILHYVEKLNEIDTDGVEPLSGIHDQMNVLRDDVEKESIATALALQNAPDRQDRFFKVPKVIG.

It belongs to the GatC family. In terms of assembly, heterotrimer of A, B and C subunits.

It carries out the reaction L-glutamyl-tRNA(Gln) + L-glutamine + ATP + H2O = L-glutaminyl-tRNA(Gln) + L-glutamate + ADP + phosphate + H(+). It catalyses the reaction L-aspartyl-tRNA(Asn) + L-glutamine + ATP + H2O = L-asparaginyl-tRNA(Asn) + L-glutamate + ADP + phosphate + 2 H(+). Its function is as follows. Allows the formation of correctly charged Asn-tRNA(Asn) or Gln-tRNA(Gln) through the transamidation of misacylated Asp-tRNA(Asn) or Glu-tRNA(Gln) in organisms which lack either or both of asparaginyl-tRNA or glutaminyl-tRNA synthetases. The reaction takes place in the presence of glutamine and ATP through an activated phospho-Asp-tRNA(Asn) or phospho-Glu-tRNA(Gln). This is Aspartyl/glutamyl-tRNA(Asn/Gln) amidotransferase subunit C from Chlorobium limicola (strain DSM 245 / NBRC 103803 / 6330).